The sequence spans 499 residues: Rhamnogalacturonate lyase A (499 aa).

The N-terminal stretch at 1-20 (MLSKTSLLSLLSLAAGVVNA) is a signal peptide. 2 disulfides stabilise this stretch: C49/C92 and C183/C192.

It belongs to the polysaccharide lyase 4 family.

It is found in the secreted. The catalysed reaction is Endotype eliminative cleavage of L-alpha-rhamnopyranosyl-(1-&gt;4)-alpha-D-galactopyranosyluronic acid bonds of rhamnogalacturonan I domains in ramified hairy regions of pectin leaving L-rhamnopyranose at the reducing end and 4-deoxy-4,5-unsaturated D-galactopyranosyluronic acid at the non-reducing end.. In terms of biological role, pectinolytic enzymes consist of four classes of enzymes: pectin lyase, polygalacturonase, pectin methylesterase and rhamnogalacturonase. Degrades the rhamnogalacturonan I (RG-I) backbone of pectin. This Aspergillus niger protein is Rhamnogalacturonate lyase A (rglA).